The following is a 2053-amino-acid chain: Cell adhesion molecule DSCAML1 (2053 aa).

An N-terminal signal peptide occupies residues 1-18 (MWLVTFLLLLDSLHKARP). Ig-like C2-type domains are found at residues 19 to 119 (EDVG…NIRI), 115 to 217 (PNIR…ARLS), 226 to 310 (PTIL…GILT), 314 to 396 (PLHV…QTAQ), 408 to 501 (PRIV…ARIN), 506 to 586 (PSIR…LSIS), 596 to 685 (PPLI…RQLI), 690 to 784 (PRFV…MFLT), and 788 to 885 (PAMI…LTVQ). At 19–1591 (EDVGTSLYFV…AQGEGDDVKK (1573 aa)) the chain is on the extracellular side. 7 disulfide bridges follow: Cys-47/Cys-103, Cys-146/Cys-198, Cys-247/Cys-294, Cys-336/Cys-386, Cys-429/Cys-485, Cys-526/Cys-575, and Cys-617/Cys-669. Asn-79 is a glycosylation site (N-linked (GlcNAc...) asparagine). Asn-368 and Asn-471 each carry an N-linked (GlcNAc...) asparagine glycan. Asn-666 and Asn-710 each carry an N-linked (GlcNAc...) asparagine glycan. Cysteines 711 and 767 form a disulfide. An N-linked (GlcNAc...) asparagine glycan is attached at Asn-809. The cysteines at positions 810 and 867 are disulfide-linked. Fibronectin type-III domains are found at residues 887–984 (PPDP…TEEA), 989–1088 (PPMD…TLED), 1093–1189 (PPEN…TKED), and 1193–1288 (PPAG…AGKA). N-linked (GlcNAc...) asparagine glycans are attached at residues Asn-1144 and Asn-1162. The 100-residue stretch at 1278–1377 (EKVTIEPAGK…TGGFDTIIVN (100 aa)) folds into the Ig-like C2-type 10 domain. An intrachain disulfide couples Cys-1311 to Cys-1363. N-linked (GlcNAc...) asparagine glycosylation occurs at Asn-1345. 2 Fibronectin type-III domains span residues 1383–1477 (PPDQ…THGR) and 1478–1578 (EPSF…TIPP). A glycan (N-linked (GlcNAc...) asparagine) is linked at Asn-1561. The helical transmembrane segment at 1592 to 1612 (LFTIGCPVILATLGVALLFVV) threads the bilayer. At 1613–2053 (RKKRKEKRLK…GAYSKSYTLV (441 aa)) the chain is on the cytoplasmic side. Disordered regions lie at residues 1716–1741 (LIDMSDIRPGTNPVSRKNVKSAHSTR), 1773–1803 (HGVTVTESDSYSASLSQDTDKGRNSMVSTES), 1840–1862 (SSDQMTTGTNENADSMTSMSTPS), and 1974–2053 (LAMP…YTLV). A compositionally biased stretch (basic residues) spans 1732 to 1741 (KNVKSAHSTR). Over residues 1773–1789 (HGVTVTESDSYSASLSQ) the composition is skewed to polar residues. Residues 1977-1993 (PAPPAGTAPPAPGPTPS) are compositionally biased toward pro residues.

As to quaternary structure, homodimer; mediates homophilic interactions to promote cell adhesion. In the retina, expressed in the rod photoreceptors, AII amacrine cells and rod bipolar cells (at protein level).

The protein localises to the cell membrane. It is found in the synapse. Cell adhesion molecule that plays a role in neuronal self-avoidance. Promotes repulsion between specific neuronal processes of either the same cell or the same subtype of cells. Promotes both isoneuronal self-avoidance for creating an orderly neurite arborization in retinal rod bipolar cells and heteroneuronal self-avoidance to maintain mosaic spacing between AII amacrine cells. Adhesion molecule that promotes lamina-specific synaptic connections in the retina: expressed in specific subsets of interneurons and retinal ganglion cells (RGCs) and promotes synaptic connectivity via homophilic interactions. This chain is Cell adhesion molecule DSCAML1 (Dscaml1), found in Mus musculus (Mouse).